A 567-amino-acid polypeptide reads, in one-letter code: Malate synthase, glyoxysomal (567 aa).

Arg-182 functions as the Proton acceptor in the catalytic mechanism. The active-site Proton donor is the Asp-468. The Microbody targeting signal motif lies at 565 to 567; that stretch reads SRL.

It belongs to the malate synthase family.

It is found in the glyoxysome. The enzyme catalyses glyoxylate + acetyl-CoA + H2O = (S)-malate + CoA + H(+). The protein operates within carbohydrate metabolism; glyoxylate cycle; (S)-malate from isocitrate: step 2/2. The protein is Malate synthase, glyoxysomal of Ricinus communis (Castor bean).